The chain runs to 346 residues: tRNA N6-adenosine threonylcarbamoyltransferase (346 aa).

Residues H111 and H115 each coordinate Fe cation. Residues 134 to 138 (LVSGG), D167, G180, and N279 contribute to the substrate site. D307 is a binding site for Fe cation.

Belongs to the KAE1 / TsaD family. It depends on Fe(2+) as a cofactor.

Its subcellular location is the cytoplasm. It catalyses the reaction L-threonylcarbamoyladenylate + adenosine(37) in tRNA = N(6)-L-threonylcarbamoyladenosine(37) in tRNA + AMP + H(+). Functionally, required for the formation of a threonylcarbamoyl group on adenosine at position 37 (t(6)A37) in tRNAs that read codons beginning with adenine. Is involved in the transfer of the threonylcarbamoyl moiety of threonylcarbamoyl-AMP (TC-AMP) to the N6 group of A37, together with TsaE and TsaB. TsaD likely plays a direct catalytic role in this reaction. This chain is tRNA N6-adenosine threonylcarbamoyltransferase, found in Burkholderia multivorans (strain ATCC 17616 / 249).